Consider the following 198-residue polypeptide: Lipid A 4'-phosphatase (198 aa).

A helical membrane pass occupies residues 143-165; that stretch reads AGQHTILQVTIGSLIAWGFAYLF.

The protein belongs to the lipid A LpxF 4'-phosphatase family.

It localises to the cell inner membrane. It functions in the pathway bacterial outer membrane biogenesis; LPS lipid A biosynthesis. Functionally, removes the 4'-phosphate group from tetra- and hexaacylated lipid A species, has no 1-phosphatase or Kdo hydrolase activity. Absence of the 4'-phosphate group renders the bacteria resistant to host-derived cationic antimicrobial peptides (CAMP), allowing it to camouflage itself from the host innate immune response, and plays a critical role in the long-term colonization of the host's stomach. The chain is Lipid A 4'-phosphatase from Helicobacter pylori (strain J99 / ATCC 700824) (Campylobacter pylori J99).